A 500-amino-acid chain; its full sequence is Protein nucleotidyltransferase YdiU (500 aa).

G96, G98, R99, K119, D131, G132, R182, and R189 together coordinate ATP. D258 serves as the catalytic Proton acceptor. Mg(2+) contacts are provided by N259 and D268. Residue D268 coordinates ATP.

The protein belongs to the SELO family. Mg(2+) serves as cofactor. The cofactor is Mn(2+).

The catalysed reaction is L-seryl-[protein] + ATP = 3-O-(5'-adenylyl)-L-seryl-[protein] + diphosphate. The enzyme catalyses L-threonyl-[protein] + ATP = 3-O-(5'-adenylyl)-L-threonyl-[protein] + diphosphate. It catalyses the reaction L-tyrosyl-[protein] + ATP = O-(5'-adenylyl)-L-tyrosyl-[protein] + diphosphate. It carries out the reaction L-histidyl-[protein] + UTP = N(tele)-(5'-uridylyl)-L-histidyl-[protein] + diphosphate. The catalysed reaction is L-seryl-[protein] + UTP = O-(5'-uridylyl)-L-seryl-[protein] + diphosphate. The enzyme catalyses L-tyrosyl-[protein] + UTP = O-(5'-uridylyl)-L-tyrosyl-[protein] + diphosphate. In terms of biological role, nucleotidyltransferase involved in the post-translational modification of proteins. It can catalyze the addition of adenosine monophosphate (AMP) or uridine monophosphate (UMP) to a protein, resulting in modifications known as AMPylation and UMPylation. This chain is Protein nucleotidyltransferase YdiU, found in Rhizobium johnstonii (strain DSM 114642 / LMG 32736 / 3841) (Rhizobium leguminosarum bv. viciae).